Reading from the N-terminus, the 211-residue chain is Probable metallo-hydrolase YqgX (211 aa).

Residues His-54, His-56, Asp-58, His-59, His-130, Asp-149, and His-190 each coordinate Zn(2+).

It belongs to the metallo-beta-lactamase superfamily. Glyoxalase II family. Zn(2+) serves as cofactor.

This Bacillus subtilis (strain 168) protein is Probable metallo-hydrolase YqgX (yqgX).